We begin with the raw amino-acid sequence, 579 residues long: Tetratricopeptide repeat protein 39C (579 aa).

Polar residues predominate over residues 182-197 (QQGALASDQANHNTST). The disordered stretch occupies residues 182–202 (QQGALASDQANHNTSTGSGGR). TPR repeat units lie at residues 311–344 (SLFI…ASDQ), 349–382 (HVCL…SRWS), and 481–514 (GLKH…EYGR).

Belongs to the TTC39 family.

The sequence is that of Tetratricopeptide repeat protein 39C (ttc39c) from Danio rerio (Zebrafish).